The sequence spans 278 residues: Biotin synthase (278 aa).

Residues 1–227 (MQIMLCAISN…QSVVMVAGGR (227 aa)) enclose the Radical SAM core domain. Positions 16, 20, and 23 each coordinate [4Fe-4S] cluster. The [2Fe-2S] cluster site is built by Cys-60, Cys-95, and Cys-153.

Belongs to the radical SAM superfamily. Biotin synthase family. In terms of assembly, homodimer. [4Fe-4S] cluster serves as cofactor. The cofactor is [2Fe-2S] cluster.

The enzyme catalyses (4R,5S)-dethiobiotin + (sulfur carrier)-SH + 2 reduced [2Fe-2S]-[ferredoxin] + 2 S-adenosyl-L-methionine = (sulfur carrier)-H + biotin + 2 5'-deoxyadenosine + 2 L-methionine + 2 oxidized [2Fe-2S]-[ferredoxin]. The protein operates within cofactor biosynthesis; biotin biosynthesis; biotin from 7,8-diaminononanoate: step 2/2. In terms of biological role, catalyzes the conversion of dethiobiotin (DTB) to biotin by the insertion of a sulfur atom into dethiobiotin via a radical-based mechanism. In Campylobacter jejuni subsp. jejuni serotype O:6 (strain 81116 / NCTC 11828), this protein is Biotin synthase.